Here is a 143-residue protein sequence, read N- to C-terminus: Large ribosomal subunit protein uL11 (143 aa).

This sequence belongs to the universal ribosomal protein uL11 family. Part of the ribosomal stalk of the 50S ribosomal subunit. Interacts with L10 and the large rRNA to form the base of the stalk. L10 forms an elongated spine to which L12 dimers bind in a sequential fashion forming a multimeric L10(L12)X complex. In terms of processing, one or more lysine residues are methylated.

Its function is as follows. Forms part of the ribosomal stalk which helps the ribosome interact with GTP-bound translation factors. This Chromobacterium violaceum (strain ATCC 12472 / DSM 30191 / JCM 1249 / CCUG 213 / NBRC 12614 / NCIMB 9131 / NCTC 9757 / MK) protein is Large ribosomal subunit protein uL11.